A 375-amino-acid polypeptide reads, in one-letter code: Homoserine O-succinyltransferase (375 aa).

The AB hydrolase-1 domain maps to 48–358 (NAVLVCHALS…PAGHDSFLLD (311 aa)). The Nucleophile role is filled by S154. R224 serves as a coordination point for substrate. Catalysis depends on residues D319 and H352. D353 is a binding site for substrate.

The protein belongs to the AB hydrolase superfamily. MetX family. As to quaternary structure, homodimer.

The protein resides in the cytoplasm. The catalysed reaction is L-homoserine + succinyl-CoA = O-succinyl-L-homoserine + CoA. The protein operates within amino-acid biosynthesis; L-methionine biosynthesis via de novo pathway; O-succinyl-L-homoserine from L-homoserine: step 1/1. Functionally, transfers a succinyl group from succinyl-CoA to L-homoserine, forming succinyl-L-homoserine. The chain is Homoserine O-succinyltransferase from Azoarcus sp. (strain BH72).